The chain runs to 452 residues: Phosphoglucosamine mutase (452 aa).

The active-site Phosphoserine intermediate is serine 103. Residues serine 103, aspartate 244, aspartate 246, and aspartate 248 each contribute to the Mg(2+) site. The residue at position 103 (serine 103) is a Phosphoserine.

The protein belongs to the phosphohexose mutase family. Requires Mg(2+) as cofactor. Activated by phosphorylation.

It catalyses the reaction alpha-D-glucosamine 1-phosphate = D-glucosamine 6-phosphate. In terms of biological role, catalyzes the conversion of glucosamine-6-phosphate to glucosamine-1-phosphate. The protein is Phosphoglucosamine mutase of Fusobacterium nucleatum subsp. nucleatum (strain ATCC 25586 / DSM 15643 / BCRC 10681 / CIP 101130 / JCM 8532 / KCTC 2640 / LMG 13131 / VPI 4355).